We begin with the raw amino-acid sequence, 457 residues long: Putative zinc finger CCCH domain-containing protein 21 (457 aa).

Disordered regions lie at residues proline 51–serine 73, leucine 102–leucine 130, threonine 195–arginine 221, and arginine 280–valine 329. The segment covering aspartate 57 to tyrosine 66 has biased composition (gly residues). Positions alanine 215–glutamate 276 form a coiled coil. 2 C3H1-type zinc fingers span residues alanine 382–glutamine 409 and arginine 419–leucine 447.

The chain is Putative zinc finger CCCH domain-containing protein 21 from Oryza sativa subsp. japonica (Rice).